The sequence spans 73 residues: U-scoloptoxin(15)-Sm3a (73 aa).

The signal sequence occupies residues 1–23 (MERKVFLLLFVIVLLTLPGFMSA).

This sequence belongs to the scoloptoxin-15 family. In terms of processing, contains 2 disulfide bonds. As to expression, expressed by the venom gland.

It is found in the secreted. The protein is U-scoloptoxin(15)-Sm3a of Scolopendra morsitans (Tanzanian blue ringleg centipede).